Consider the following 216-residue polypeptide: ATP-dependent dethiobiotin synthetase BioD (216 aa).

12-17 provides a ligand contact to ATP; sequence GVGKSY. Serine 16 contributes to the Mg(2+) binding site. The active site involves lysine 37. Threonine 41 contacts substrate. Histidine 53 and glutamate 115 together coordinate Mg(2+). An ATP-binding site is contributed by 115–118; the sequence is EGAG.

The protein belongs to the dethiobiotin synthetase family. Homodimer. The cofactor is Mg(2+).

Its subcellular location is the cytoplasm. It carries out the reaction (7R,8S)-7,8-diammoniononanoate + CO2 + ATP = (4R,5S)-dethiobiotin + ADP + phosphate + 3 H(+). It functions in the pathway cofactor biosynthesis; biotin biosynthesis; biotin from 7,8-diaminononanoate: step 1/2. Catalyzes a mechanistically unusual reaction, the ATP-dependent insertion of CO2 between the N7 and N8 nitrogen atoms of 7,8-diaminopelargonic acid (DAPA, also called 7,8-diammoniononanoate) to form a ureido ring. The chain is ATP-dependent dethiobiotin synthetase BioD from Wolinella succinogenes (strain ATCC 29543 / DSM 1740 / CCUG 13145 / JCM 31913 / LMG 7466 / NCTC 11488 / FDC 602W) (Vibrio succinogenes).